The chain runs to 432 residues: Serine/threonine-protein phosphatase 2A activator 1 (432 aa).

The interval 322–432 is disordered; that stretch reads PYSKVEDEEP…MAPTKAPWAK (111 aa). The segment covering 366–389 has biased composition (basic and acidic residues); it reads TVERLARRDGQRAAREKEEREDRA. A compositionally biased stretch (low complexity) spans 396–412; it reads TTGAPGATALPPTRAPG.

This sequence belongs to the PTPA-type PPIase family.

The protein localises to the cytoplasm. It localises to the nucleus. It carries out the reaction [protein]-peptidylproline (omega=180) = [protein]-peptidylproline (omega=0). Its function is as follows. PPIases accelerate the folding of proteins. It catalyzes the cis-trans isomerization of proline imidic peptide bonds in oligopeptides. Acts as a regulatory subunit for PP2A-like phosphatases modulating their activity or substrate specificity, probably by inducing a conformational change in the catalytic subunit, a direct target of the PPIase. Can reactivate inactive phosphatase PP2A-phosphatase methylesterase complexes (PP2Ai) in presence of ATP and Mg(2+) by dissociating the inactive form from the complex. The chain is Serine/threonine-protein phosphatase 2A activator 1 (RRD1) from Yarrowia lipolytica (strain CLIB 122 / E 150) (Yeast).